We begin with the raw amino-acid sequence, 118 residues long: Small ribosomal subunit protein uS13 (118 aa).

Residues 94 to 118 form a disordered region; the sequence is SLPVRGQRTKTNARTRKGPRKPIKK.

The protein belongs to the universal ribosomal protein uS13 family. In terms of assembly, part of the 30S ribosomal subunit. Forms a loose heterodimer with protein S19. Forms two bridges to the 50S subunit in the 70S ribosome.

In terms of biological role, located at the top of the head of the 30S subunit, it contacts several helices of the 16S rRNA. In the 70S ribosome it contacts the 23S rRNA (bridge B1a) and protein L5 of the 50S subunit (bridge B1b), connecting the 2 subunits; these bridges are implicated in subunit movement. Contacts the tRNAs in the A and P-sites. This is Small ribosomal subunit protein uS13 from Actinobacillus pleuropneumoniae serotype 5b (strain L20).